Consider the following 696-residue polypeptide: Elongation factor G (696 aa).

Positions 8-288 (EDYRNFGIMA…AVVEYLPSPA (281 aa)) constitute a tr-type G domain. GTP is bound by residues 17–24 (AHIDAGKT), 86–90 (DTPGH), and 140–143 (NKMD).

The protein belongs to the TRAFAC class translation factor GTPase superfamily. Classic translation factor GTPase family. EF-G/EF-2 subfamily.

Its subcellular location is the cytoplasm. In terms of biological role, catalyzes the GTP-dependent ribosomal translocation step during translation elongation. During this step, the ribosome changes from the pre-translocational (PRE) to the post-translocational (POST) state as the newly formed A-site-bound peptidyl-tRNA and P-site-bound deacylated tRNA move to the P and E sites, respectively. Catalyzes the coordinated movement of the two tRNA molecules, the mRNA and conformational changes in the ribosome. This is Elongation factor G from Mesorhizobium japonicum (strain LMG 29417 / CECT 9101 / MAFF 303099) (Mesorhizobium loti (strain MAFF 303099)).